A 312-amino-acid polypeptide reads, in one-letter code: Homoserine O-succinyltransferase (312 aa).

The Acyl-thioester intermediate role is filled by cysteine 142. Residues lysine 163 and serine 192 each contribute to the substrate site. Histidine 235 functions as the Proton acceptor in the catalytic mechanism. Glutamate 237 is an active-site residue. Arginine 249 contacts substrate.

It belongs to the MetA family.

It is found in the cytoplasm. It carries out the reaction L-homoserine + succinyl-CoA = O-succinyl-L-homoserine + CoA. It functions in the pathway amino-acid biosynthesis; L-methionine biosynthesis via de novo pathway; O-succinyl-L-homoserine from L-homoserine: step 1/1. Functionally, transfers a succinyl group from succinyl-CoA to L-homoserine, forming succinyl-L-homoserine. This is Homoserine O-succinyltransferase from Aliivibrio salmonicida (strain LFI1238) (Vibrio salmonicida (strain LFI1238)).